The primary structure comprises 714 residues: Fatty acid oxidation complex subunit alpha (714 aa).

Residues 1–190 (MDTVSAFKLE…KAGLVDEVVP (190 aa)) form an enoyl-CoA hydratase region. Positions 306 to 714 (GPLTSIAVLG…TFWPADERLT (409 aa)) are 3-hydroxyacyl-CoA dehydrogenase.

In the N-terminal section; belongs to the enoyl-CoA hydratase/isomerase family. It in the central section; belongs to the 3-hydroxyacyl-CoA dehydrogenase family. As to quaternary structure, heterotetramer of two alpha chains (FadJ) and two beta chains (FadI).

The protein resides in the cytoplasm. The enzyme catalyses a (3S)-3-hydroxyacyl-CoA = a (2E)-enoyl-CoA + H2O. The catalysed reaction is a 4-saturated-(3S)-3-hydroxyacyl-CoA = a (3E)-enoyl-CoA + H2O. It carries out the reaction a (3S)-3-hydroxyacyl-CoA + NAD(+) = a 3-oxoacyl-CoA + NADH + H(+). It catalyses the reaction (3S)-3-hydroxybutanoyl-CoA = (3R)-3-hydroxybutanoyl-CoA. Its pathway is lipid metabolism; fatty acid beta-oxidation. Functionally, catalyzes the formation of a hydroxyacyl-CoA by addition of water on enoyl-CoA. Also exhibits 3-hydroxyacyl-CoA epimerase and 3-hydroxyacyl-CoA dehydrogenase activities. This chain is Fatty acid oxidation complex subunit alpha, found in Klebsiella pneumoniae (strain 342).